The chain runs to 524 residues: 12S seed storage protein CRC (524 aa).

Positions 1–23 are cleaved as a signal peptide; sequence MVKLSNLLVATFGVLLVLNGCLA. Cysteines 37 and 70 form a disulfide. Cupin type-1 domains follow at residues 42–289 and 346–495; these read LDVL…QLAQ and ENID…EEAR. A Phosphoserine modification is found at S53. Y78 bears the Phosphotyrosine mark. Phosphoserine is present on S97. An intrachain disulfide couples C113 to C340. T116 carries the phosphothreonine modification. The disordered stretch occupies residues 119 to 190; it reads DSQPMQGQQQ…QGQQGQQGFR (72 aa). The segment covering 124–188 has biased composition (low complexity); that stretch reads QGQQQGQPWQ…EGQGQQGQQG (65 aa). Residues S259 and S366 each carry the phosphoserine modification. T459 carries the phosphothreonine modification. S484 is subject to Phosphoserine. T501 is modified (phosphothreonine).

It belongs to the 11S seed storage protein (globulins) family. In terms of assembly, hexamer; each subunit is composed of an acidic and a basic chain derived from a single precursor and linked by a disulfide bond. Post-translationally, proteolytically processed during seed maturation at a conserved Asn-Gly peptide bond by an asparaginyl endopeptidase to produce two mature polypeptides referred to as alpha and beta subunits that are joined together by a disulfide bond. Phosphorylated in seeds on some Tyr residues in response to abscisic acid (ABA). Accumulates in seeds 8 days after anthesis.

The protein resides in the protein storage vacuole. Seed storage protein. In Arabidopsis thaliana (Mouse-ear cress), this protein is 12S seed storage protein CRC (CRC).